Consider the following 156-residue polypeptide: Small ribosomal subunit protein uS7 (156 aa).

It belongs to the universal ribosomal protein uS7 family. In terms of assembly, part of the 30S ribosomal subunit. Contacts proteins S9 and S11.

In terms of biological role, one of the primary rRNA binding proteins, it binds directly to 16S rRNA where it nucleates assembly of the head domain of the 30S subunit. Is located at the subunit interface close to the decoding center, probably blocks exit of the E-site tRNA. The protein is Small ribosomal subunit protein uS7 of Myxococcus xanthus (strain DK1622).